The primary structure comprises 500 residues: NAD(P)H-quinone oxidoreductase chain 4, chloroplastic (500 aa).

Transmembrane regions (helical) follow at residues 4-24 (FPWL…IFFL), 35-55 (YTIC…CYHF), 87-107 (IGPV…AWPV), 113-130 (LFHF…GSFS), 134-154 (LLLF…LLSM), 167-187 (FILY…GVGL), 207-227 (VALE…KLPI), 242-262 (HYST…YGLI), 272-292 (AHSI…IYAA), 305-325 (IAYS…SITD), 330-350 (GAIL…FLAG), 386-406 (LALP…GIIT), 416-436 (IVIT…LLSM), and 462-482 (LFVS…PDFV).

Belongs to the complex I subunit 4 family.

It localises to the plastid. The protein localises to the chloroplast thylakoid membrane. It carries out the reaction a plastoquinone + NADH + (n+1) H(+)(in) = a plastoquinol + NAD(+) + n H(+)(out). The enzyme catalyses a plastoquinone + NADPH + (n+1) H(+)(in) = a plastoquinol + NADP(+) + n H(+)(out). The polypeptide is NAD(P)H-quinone oxidoreductase chain 4, chloroplastic (Guizotia abyssinica (Niger)).